A 234-amino-acid polypeptide reads, in one-letter code: tRNA (guanine-N(1)-)-methyltransferase (234 aa).

S-adenosyl-L-methionine contacts are provided by residues Gly115 and 135–140 (VGDYIL).

This sequence belongs to the RNA methyltransferase TrmD family. As to quaternary structure, homodimer.

It is found in the cytoplasm. It catalyses the reaction guanosine(37) in tRNA + S-adenosyl-L-methionine = N(1)-methylguanosine(37) in tRNA + S-adenosyl-L-homocysteine + H(+). Specifically methylates guanosine-37 in various tRNAs. The polypeptide is tRNA (guanine-N(1)-)-methyltransferase (Rickettsia peacockii (strain Rustic)).